Reading from the N-terminus, the 367-residue chain is MDWLCKLEEDWKDSVFRDAVKDSLDICGAISPNERFTFVETPHHSFLLVTNILPDEHGVIKDKKLTPGDLITPSVTSVPVGNAKDLNHDIYQSSESSNGKTVLQKGCLRPNNSNYLMFNAKHIPEHHTLFTNAYVSYSKEDIQTSLSFNKSAFISKILSRCNVPGILDHNNVIHVDMLLWLLFAGPLSCCSRTHCFGYTRPDIRRPFPVVLPPILYNDSVDIKMFVNMAEIYVYGWYGDDKIKSFETTFFKNEELQAMIGELRAKYVRKSVPLWHVNSRICLFCALYLQNRLCLENLKHDVNKIPLSPIIIQDCVFNDTNISCQPTVAVGHITPGTNVTKLFPVYQLDKLLSYISLQPDGTCVITSP.

The protein belongs to the herpesviridae UL95 family.

The protein is Protein U67 of Elephantid herpesvirus 1 (isolate Asian elephant/Berlin/Kiba/1998) (EIHV-1).